We begin with the raw amino-acid sequence, 144 residues long: Cell division protein SepF (144 aa).

The segment covering 21–38 (TDLQGTKTTDEVSPTSRP) has biased composition (polar residues). The interval 21–40 (TDLQGTKTTDEVSPTSRPDN) is disordered.

It belongs to the SepF family. Homodimer. Interacts with FtsZ.

Its subcellular location is the cytoplasm. Its function is as follows. Cell division protein that is part of the divisome complex and is recruited early to the Z-ring. Probably stimulates Z-ring formation, perhaps through the cross-linking of FtsZ protofilaments. Its function overlaps with FtsA. The sequence is that of Cell division protein SepF from Latilactobacillus sakei subsp. sakei (strain 23K) (Lactobacillus sakei subsp. sakei).